A 284-amino-acid chain; its full sequence is Tryptophan 2,3-dioxygenase (284 aa).

Substrate-binding positions include 53 to 57 (FIVQH), Tyr115, and Arg119. Position 242 (His242) interacts with heme. Thr256 lines the substrate pocket.

This sequence belongs to the tryptophan 2,3-dioxygenase family. Homotetramer. Requires heme as cofactor.

The enzyme catalyses L-tryptophan + O2 = N-formyl-L-kynurenine. It functions in the pathway amino-acid degradation; L-tryptophan degradation via kynurenine pathway; L-kynurenine from L-tryptophan: step 1/2. In terms of biological role, heme-dependent dioxygenase that catalyzes the oxidative cleavage of the L-tryptophan (L-Trp) pyrrole ring and converts L-tryptophan to N-formyl-L-kynurenine. Catalyzes the oxidative cleavage of the indole moiety. The polypeptide is Tryptophan 2,3-dioxygenase (Bordetella parapertussis (strain 12822 / ATCC BAA-587 / NCTC 13253)).